The chain runs to 592 residues: Cyclin-dependent kinase-like 3 (592 aa).

Residues Y4–F286 form the Protein kinase domain. ATP-binding positions include V10 to V18 and K33. The short motif at N44–E50 is the [NKR]KIAxRE element. The Proton acceptor role is filled by D125. T158 is modified (phosphothreonine). At Y160 the chain carries Phosphotyrosine. The span at G368–E379 shows a compositional bias: basic and acidic residues. Disordered regions lie at residues G368–N390 and R459–I485. Residues S466–S477 are compositionally biased toward polar residues.

It belongs to the protein kinase superfamily. CMGC Ser/Thr protein kinase family. CDC2/CDKX subfamily.

It localises to the cytoplasm. The catalysed reaction is L-seryl-[protein] + ATP = O-phospho-L-seryl-[protein] + ADP + H(+). It carries out the reaction L-threonyl-[protein] + ATP = O-phospho-L-threonyl-[protein] + ADP + H(+). The sequence is that of Cyclin-dependent kinase-like 3 from Homo sapiens (Human).